The primary structure comprises 167 residues: UTP pyrophosphatase (167 aa).

The catalysed reaction is UTP + H2O = UMP + diphosphate + H(+). In terms of biological role, specifically catalyzes the hydrolysis of UTP to UMP and diphosphate in vitro, albeit at apparently slow rate. Shows no activity towards ATP, GTP, CTP, dTTP and ITP as substrates. The sequence is that of UTP pyrophosphatase from Escherichia coli (strain K12).